The primary structure comprises 459 residues: Alcohol acyl transferase 1 allele GSa (459 aa).

Active-site proton acceptor residues include H164 and N385.

This sequence belongs to the plant acyltransferase family. Highly expressed in the cortex and skin of ripe fruit.

It carries out the reaction butan-1-ol + acetyl-CoA = butyl acetate + CoA. The enzyme catalyses butan-1-ol + butanoyl-CoA = butyl butanoate + CoA. The catalysed reaction is butan-1-ol + hexanoyl-CoA = butyl hexanoate + CoA. It catalyses the reaction hexan-1-ol + butanoyl-CoA = hexyl butanoate + CoA. It carries out the reaction hexan-1-ol + acetyl-CoA = hexyl acetate + CoA. The enzyme catalyses 2-methylbutan-1-ol + butanoyl-CoA = 2-methylbutyl butanoate + CoA. The catalysed reaction is ethanol + butanoyl-CoA = ethyl butanoate + CoA. It catalyses the reaction hexanoyl-CoA + ethanol = ethyl hexanoate + CoA. Functionally, involved in the biosynthesis of volatile esters which confer ripe apple fruit flavor. Alcohol acyl transferase that can use a wide range of alcohols as substrate, including 2-methylbutanol, hexanol and ethanol, to produce esters such as butyl butanoate, butyl hexanoate, hexyl butanoate, ethyl butanoate and ethyl hexanoate and, to some extent, 2-methylbutyl acetate (2MBA), butyl acetate, hexyl acetate and 2-methylbutyl butanoate (2MBB). The chain is Alcohol acyl transferase 1 allele GSa from Malus domestica (Apple).